We begin with the raw amino-acid sequence, 308 residues long: Glycine-rich protein GRP33 (308 aa).

Residues 83–118 (DQFPKYNFLGKLLGPGGSTMKQLQDETMTKISILGR) form the KH domain. 2 stretches are compositionally biased toward gly residues: residues 203–220 (GPMG…GGFS) and 273–294 (RGAG…GGGK). Disordered regions lie at residues 203–222 (GPMG…FSGP) and 270–308 (SPGR…AAPY).

The arginines in the Gly-rich domain might be methylated.

This is Glycine-rich protein GRP33 from Artemia salina (Brine shrimp).